The primary structure comprises 618 residues: MPIQVLPPQLANQIAAGEVVERPASVVKELVENSLDAGATRVDIDIERGGAKLIRIRDNGCGIKKEELALALARHATSKIASLDDLEAIISLGFRGEALASISSVSRLTLTSRTAEQAEAWQAYAEGRDMDVTVKPAAHPVGTTLEVLDLFYNTPARRKFMRTEKTEFNHIDEIIRRIALARFDVTLNLSHNGKLVRQYRAVAKDGQKERRLGAICGTPFLEQALAIEWQHGDLTLRGWVADPNHTTTALTEIQYCYVNGRMMRDRLINHAIRQACEDKLGADQQPAFVLYLEIDPHQVDVNVHPAKHEVRFHQSRLVHDFIYQGVLSVLQQQTETTLPLEEIAPAPRHVPENRIAAGRNHFAVPAEPTTAREPATPRYSGGASGGNGGRQTAGGWPHAQPGYQKQQGEVYRALLQTPTTSPAPEAVAPALDGHSQSFGRVLTIVCGDCALLEHAGTIQLLSLPVAERWLRQAQLTPGQSPVCAQPLLIPLRLKVSADEKAALQKAQSLLGELGIEFQSDAQHVTIRAVPLPLRQQNLQILIPELIGYLAQQTTFATVNIAQWIARNVQSEHPQWSMAQAISLLADVERLCPQLVKAPPGGLLQPVDLHSAMNALKHE.

Residues 367–402 are disordered; sequence EPTTAREPATPRYSGGASGGNGGRQTAGGWPHAQPG. Positions 382–392 are enriched in gly residues; the sequence is GASGGNGGRQT.

It belongs to the DNA mismatch repair MutL/HexB family.

In terms of biological role, this protein is involved in the repair of mismatches in DNA. It is required for dam-dependent methyl-directed DNA mismatch repair. May act as a 'molecular matchmaker', a protein that promotes the formation of a stable complex between two or more DNA-binding proteins in an ATP-dependent manner without itself being part of a final effector complex. The protein is DNA mismatch repair protein MutL of Salmonella paratyphi A (strain ATCC 9150 / SARB42).